Reading from the N-terminus, the 55-residue chain is Spermatid nuclear transition protein 1 (55 aa).

A compositionally biased stretch (basic residues) spans M1 to K42. The interval M1–L55 is disordered. Residues S36 and S40 each carry the phosphoserine modification.

The protein belongs to the nuclear transition protein 1 family. As to expression, testis-specific.

The protein localises to the nucleus. It is found in the chromosome. Functionally, plays a key role in the replacement of histones to protamine in the elongating spermatids of mammals. In condensing spermatids, loaded onto the nucleosomes, where it promotes the recruitment and processing of protamines, which are responsible for histone eviction. The histone H2AB1-H2BC1/TH2B dimer is required for loading of TNP1 onto chromatin. This Mus musculus (Mouse) protein is Spermatid nuclear transition protein 1.